The following is a 369-amino-acid chain: Phenylalanine--tRNA ligase alpha subunit (369 aa).

E269 is a Mg(2+) binding site.

It belongs to the class-II aminoacyl-tRNA synthetase family. Phe-tRNA synthetase alpha subunit type 1 subfamily. Tetramer of two alpha and two beta subunits. Mg(2+) serves as cofactor.

It is found in the cytoplasm. It catalyses the reaction tRNA(Phe) + L-phenylalanine + ATP = L-phenylalanyl-tRNA(Phe) + AMP + diphosphate + H(+). The sequence is that of Phenylalanine--tRNA ligase alpha subunit from Brucella melitensis biotype 1 (strain ATCC 23456 / CCUG 17765 / NCTC 10094 / 16M).